We begin with the raw amino-acid sequence, 211 residues long: Putative F-box protein At1g52490 (211 aa).

The 48-residue stretch at Glu12–Val59 folds into the F-box domain.

The protein is Putative F-box protein At1g52490 of Arabidopsis thaliana (Mouse-ear cress).